A 530-amino-acid chain; its full sequence is CTP synthase (530 aa).

The interval 1 to 267 (MTKYVFVTGG…DDFVLNHFKM (267 aa)) is amidoligase domain. Ser13 contributes to the CTP binding site. A UTP-binding site is contributed by Ser13. 14 to 19 (SLGKGI) is a binding site for ATP. Position 54 (Tyr54) interacts with L-glutamine. Position 71 (Asp71) interacts with ATP. Positions 71 and 141 each coordinate Mg(2+). CTP contacts are provided by residues 148–150 (DIE), 188–193 (KTKPTQ), and Lys224. Residues 188–193 (KTKPTQ) and Lys224 contribute to the UTP site. Position 240 to 242 (240 to 242 (RDA)) interacts with ATP. One can recognise a Glutamine amidotransferase type-1 domain in the interval 292 to 530 (KIALVGKYIE…LFKAFIGATM (239 aa)). Position 354 (Gly354) interacts with L-glutamine. Cys381 acts as the Nucleophile; for glutamine hydrolysis in catalysis. L-glutamine-binding positions include 382–385 (LGMQ), Glu405, and Arg463. Active-site residues include His508 and Glu510.

The protein belongs to the CTP synthase family. In terms of assembly, homotetramer.

The enzyme catalyses UTP + L-glutamine + ATP + H2O = CTP + L-glutamate + ADP + phosphate + 2 H(+). It carries out the reaction L-glutamine + H2O = L-glutamate + NH4(+). The catalysed reaction is UTP + NH4(+) + ATP = CTP + ADP + phosphate + 2 H(+). It functions in the pathway pyrimidine metabolism; CTP biosynthesis via de novo pathway; CTP from UDP: step 2/2. Allosterically activated by GTP, when glutamine is the substrate; GTP has no effect on the reaction when ammonia is the substrate. The allosteric effector GTP functions by stabilizing the protein conformation that binds the tetrahedral intermediate(s) formed during glutamine hydrolysis. Inhibited by the product CTP, via allosteric rather than competitive inhibition. Catalyzes the ATP-dependent amination of UTP to CTP with either L-glutamine or ammonia as the source of nitrogen. Regulates intracellular CTP levels through interactions with the four ribonucleotide triphosphates. The chain is CTP synthase from Latilactobacillus sakei subsp. sakei (strain 23K) (Lactobacillus sakei subsp. sakei).